The chain runs to 360 residues: uncharacterized protein (360 aa).

4 to 22 (KVLHIGAGGFGERWCDTFL) is an NAD(+) binding site.

Its function is as follows. Could be a NAD-dependent oxidoreductase. This is an uncharacterized protein from Sinorhizobium fredii (strain NBRC 101917 / NGR234).